Reading from the N-terminus, the 795-residue chain is uncharacterized protein (795 aa).

Residues 228–280 (NIICFKNKCKNNEKEKKEEEEDHDHDHDDKKKEKEDKEKEEEEEEEDSNDDFE) are a coiled coil. 4 disordered regions span residues 242–278 (EKKEEEEDHDHDHDDKKKEKEDKEKEEEEEEEDSNDD), 326–430 (TTTT…TPNR), 455–484 (INQQQQQQQQQQSSTSPSISPSSSNIKSEP), and 673–743 (NNNN…NENE). Over residues 251–264 (DHDHDDKKKEKEDK) the composition is skewed to basic and acidic residues. Acidic residues predominate over residues 265–278 (EKEEEEEEEDSNDD). Residues 326-345 (TTTTTVNGSKNSSNTTTPIT) are compositionally biased toward low complexity. Residues 362–373 (DDDDDDDLTDED) show a composition bias toward acidic residues. Positions 377–398 (HNEIYSTSPKVSHSTFCQSSPT) are enriched in polar residues. 3 stretches are compositionally biased toward low complexity: residues 399 to 414 (LLDLDLQQQQQQQQQQ), 455 to 480 (INQQQQQQQQQQSSTSPSISPSSSNI), and 673 to 729 (NNNN…NQNE). Residues 732-743 (NENKNENENENE) show a composition bias toward basic and acidic residues.

This is an uncharacterized protein from Dictyostelium discoideum (Social amoeba).